The chain runs to 1055 residues: Endo-1,4-beta-xylanase A (1055 aa).

The signal sequence occupies residues 1 to 29 (MRKKRRGFLNASTAVLVGILAGFLGVVLA). The a stretch occupies residues 30–357 (ATGALGFAVR…TTSAEIKLEM (328 aa)). The region spanning 360-688 (EEEIPALKDV…KLAYWAIVAP (329 aa)) is the GH10 domain. Glu498 acts as the Proton donor in catalysis. Glu604 functions as the Nucleophile in the catalytic mechanism. CBM-cenC domains follow at residues 720 to 851 (PIEI…TNSQ) and 895 to 1040 (KSVA…PTNN).

The protein belongs to the glycosyl hydrolase 10 (cellulase F) family.

It carries out the reaction Endohydrolysis of (1-&gt;4)-beta-D-xylosidic linkages in xylans.. This Thermotoga neapolitana protein is Endo-1,4-beta-xylanase A (xynA).